We begin with the raw amino-acid sequence, 129 residues long: Putative pre-16S rRNA nuclease (129 aa).

Belongs to the YqgF nuclease family.

Its subcellular location is the cytoplasm. Could be a nuclease involved in processing of the 5'-end of pre-16S rRNA. The protein is Putative pre-16S rRNA nuclease of Campylobacter jejuni subsp. doylei (strain ATCC BAA-1458 / RM4099 / 269.97).